We begin with the raw amino-acid sequence, 136 residues long: Histone H3 (136 aa).

A disordered region spans residues 1–42 (MARTKQTARKSTGGKAPRKQLATKAAAKSAPATGGVKKPHRY). Residue lysine 5 is modified to N6-methylated lysine. Lysine 10 carries the N6-acetyllysine; alternate modification. Lysine 10 is subject to N6-methylated lysine; alternate. Serine 11 carries the post-translational modification Phosphoserine. N6-acetyllysine is present on residues lysine 15 and lysine 24. Low complexity predominate over residues 22-33 (ATKAAAKSAPAT). N6-methylated lysine is present on residues lysine 28, lysine 37, and lysine 80.

The protein belongs to the histone H3 family. As to quaternary structure, the nucleosome is a histone octamer containing two molecules each of H2A, H2B, H3 and H4 assembled in one H3-H4 heterotetramer and two H2A-H2B heterodimers. The octamer wraps approximately 147 bp of DNA. Post-translationally, acetylation is generally linked to gene activation. Methylation at Lys-5 is linked to gene activation. Methylation at Lys-10 is linked to gene repression.

It localises to the nucleus. Its subcellular location is the chromosome. Core component of nucleosome. Nucleosomes wrap and compact DNA into chromatin, limiting DNA accessibility to the cellular machineries which require DNA as a template. Histones thereby play a central role in transcription regulation, DNA repair, DNA replication and chromosomal stability. DNA accessibility is regulated via a complex set of post-translational modifications of histones, also called histone code, and nucleosome remodeling. This Acropora formosa (Staghorn coral) protein is Histone H3.